The following is an 848-amino-acid chain: Crooked neck-like protein 1 (848 aa).

An N-acetylalanine modification is found at threonine 2. The interval 81 to 106 (RSSRTPHSTRCRKEDAQPGHHGNGAA) is disordered. 17 HAT repeats span residues 222-254 (DYKL…WEES), 256-288 (KEIQ…MEMK), 290-322 (RQVN…MEEM), 324-355 (GNVA…FELR), 357-388 (KEVD…FEEK), 390-425 (AYFA…FEEN), 427-461 (KEFE…FEKK), 471-503 (IIVS…LVES), 505-539 (AEAE…LWIN), 549-585 (KDPE…FEIR), 587-618 (KNLS…LELQ), 620-652 (REFD…LETI), 654-688 (GDID…FEIE), 690-721 (EETE…FELS), 726-767 (GSLT…EFGT), 769-807 (SDKE…YIFP), and 809-834 (DAAN…EKED). The mediates interaction with HSP90 stretch occupies residues 411–628 (MDEHLYVAFA…LREFDRCRKL (218 aa)). Position 503 is a phosphoserine (serine 503). Residues 827-848 (KQQQEKEDAEHHPDEDVDESES) are disordered. The span at 828 to 840 (QQQEKEDAEHHPD) shows a compositional bias: basic and acidic residues.

This sequence belongs to the crooked-neck family. Identified in the spliceosome C complex. Present in a spliceosome complex assembled in vitro containing CRNKL1, HPRP8BP and SNRPB2. Component of the minor spliceosome, which splices U12-type introns. Isoform 2 seems to be predominant in the spliceosome complex. Interacts with PPIL2 (via the PPIase cyclophilin-type domain); they may form a trimeric complex with HSP90. Widely expressed. Highly expressed in testis. Not detected in brain and lung.

The protein resides in the nucleus. It localises to the nucleus speckle. Functionally, involved in pre-mRNA splicing process. As a component of the minor spliceosome, involved in the splicing of U12-type introns in pre-mRNAs. The protein is Crooked neck-like protein 1 (CRNKL1) of Homo sapiens (Human).